A 101-amino-acid polypeptide reads, in one-letter code: Small ribosomal subunit protein uS14 (101 aa).

The protein belongs to the universal ribosomal protein uS14 family. Part of the 30S ribosomal subunit. Contacts proteins S3 and S10.

Functionally, binds 16S rRNA, required for the assembly of 30S particles and may also be responsible for determining the conformation of the 16S rRNA at the A site. This chain is Small ribosomal subunit protein uS14, found in Wigglesworthia glossinidia brevipalpis.